The chain runs to 104 residues: N(4)-acetylcytidine amidohydrolase (104 aa).

One can recognise an ASCH domain in the interval 6-96 (ITFYQRFEAD…TIYPNEHESW (91 aa)). Lysine 21 (proton acceptor) is an active-site residue. Threonine 24 acts as the Nucleophile in catalysis. Glutamate 74 serves as the catalytic Proton donor.

The protein belongs to the N(4)-acetylcytidine amidohydrolase family.

It catalyses the reaction N(4)-acetylcytidine + H2O = cytidine + acetate + H(+). The catalysed reaction is N(4)-acetyl-2'-deoxycytidine + H2O = 2'-deoxycytidine + acetate + H(+). It carries out the reaction N(4)-acetylcytosine + H2O = cytosine + acetate + H(+). In terms of biological role, catalyzes the hydrolysis of N(4)-acetylcytidine (ac4C). The chain is N(4)-acetylcytidine amidohydrolase from Haemophilus influenzae (strain 86-028NP).